The sequence spans 542 residues: Sodium/hydrogen exchanger 8 (542 aa).

11 helical membrane-spanning segments follow: residues 55-75 (EQSSGMTIFFSLLVLAICIIL), 79-99 (LIRYRLHFLPESVAVVSLGIL), 118-138 (EEMFRPNMFFLLLLPPIIFES), 151-171 (IGSITLFAVFGTAISAFVVGG), 186-206 (NMTDSFAFGSLISAVDPVATI), 256-276 (TFLQALDYFLKMFFGSAALGT), 306-326 (AYLPYGLAEGISLSETCVFAF), 349-369 (LVLFGRAVNIFPLSYLLNFFR), 374-394 (TPKMMFIMWFSGLRGAIPYAL), 412-432 (TTIVIVLFTILLLGGSTMPLI), and 446-466 (NKKDVNLSKTEKMGNTVESEH). Thr471 is subject to Phosphothreonine. Phosphoserine occurs at positions 532 and 534.

The protein belongs to the monovalent cation:proton antiporter 1 (CPA1) transporter (TC 2.A.36) family.

It localises to the golgi apparatus membrane. Its subcellular location is the golgi apparatus. The protein resides in the trans-Golgi network membrane. It is found in the endosome. The protein localises to the multivesicular body membrane. It localises to the apical cell membrane. Its subcellular location is the cytoplasmic vesicle. The protein resides in the secretory vesicle. It is found in the acrosome. The catalysed reaction is Na(+)(in) + H(+)(out) = Na(+)(out) + H(+)(in). Its function is as follows. Na(+)/H(+) antiporter. Mediates the electoneutral exchange of intracellular H(+) ions for extracellular Na(+) in 1:1 stoichiometry. Acts as an Na(+)/H(+) exchanger in the trans-Golgi. Contributes to the regulation of pH regulation of Golgi apparatus, and consequently, in protein trafficking and endosomal morphology. In germ cells, plays a crucial role in acrosome biogenesis and sperm development, probably by playing a role in the fusion of the Golgi-derived vesicles that form the acrosomal cap. Can also be active at the cell surface of specialized cells. In the small intestine, at the cell membrane, plays a major physiological role in transepithelial absorption of Na(+) and regulates intracellular pH homeostasis of intestinal epithelial cells. Acts as an important regulator of mucosal integrity in the intestine and in the stomach, could mediate the pH fluctuation necessary for mucin exocytosis or assist membrane trafficking of other proteins. Plays a role in photoreceptor survival and in the maintenance of intracellular pH homeostasis in retinal pigment epithelium (RPE cells). The sequence is that of Sodium/hydrogen exchanger 8 (SLC9A8) from Macaca fascicularis (Crab-eating macaque).